Reading from the N-terminus, the 620-residue chain is MAATRIAILYGSETGTAQDFANILSHQLRRFHYKHTVCSIGEYSAQNILACQYLFVICSTTGQGALPQNARQSPQGKVEGTLWSVLKRSSLPPTLLDHLQVAFLGLGDSSYSKFNFAIRKLHNRIVGQLGAREIFPRLEADAIGLAGSNAGNGNGIELVYSEFEKRVLSFLNDQFPFMTVNGEQVPREPIATDIYLKPEYYLEASGNDKGTASVPCTFEGDSSVKYGTVVTNKRITATDHFQDVRQLVFSSQDGENYYPGDTVSIYPYNTDADVQAFIDTQQHWASIADVPLQIKTPTSARGICDGGLVSPLTLRNLLKYHCDIVSIPMRSFFMKTWTFAVDHERLPDGKDQLQQQRDKLREFAESEDMQDIYDYCNRPRRSILEVVQDFMSLRLPWEYILDYLPHIKPRFFSISSQPCNKDIELTIAIVRYKTILRRIRRGLCTNYISDLSEGSIIRYKVQYNDLLPAGKQDRPVIMISPGVGLAPMKCLIYAQLFNPMLLFFGNRYKDKDFLYADTLQKWADENRIKLFVCFSRSPDDSPGLKYVQDAVWENAREVARLITEENAVVYVCGSSGKMPVQVRLTLCEVLKKWGNFPDDKASEEYLKDMENSDRYLQETW.

Positions 6–168 constitute a Flavodoxin-like domain; sequence IAILYGSETG…VYSEFEKRVL (163 aa). FMN-binding positions include 12-17, 59-62, and 106-115; these read SETGTA, STTG, and LGDSSYSKFN. Residues 222 to 475 form the FAD-binding FR-type domain; that stretch reads SSVKYGTVVT…LLPAGKQDRP (254 aa). FAD contacts are provided by residues R380, 410-413, and 442-445; these read RFFS and GLCT. Residue 535 to 536 participates in NADP(+) binding; the sequence is SR. An FAD-binding site is contributed by W620.

The protein belongs to the NADPH-dependent diflavin oxidoreductase NDOR1 family. This sequence in the N-terminal section; belongs to the flavodoxin family. It in the C-terminal section; belongs to the flavoprotein pyridine nucleotide cytochrome reductase family. As to quaternary structure, interacts with DRE2; as part of the cytosolic iron-sulfur (Fe-S) protein assembly (CIA) machinery. The cofactor is FAD. It depends on FMN as a cofactor.

It is found in the cytoplasm. It localises to the mitochondrion. The enzyme catalyses 2 oxidized [2Fe-2S]-[protein] + NADPH = 2 reduced [2Fe-2S]-[protein] + NADP(+) + H(+). Functionally, NADPH-dependent reductase which is a central component of the cytosolic iron-sulfur (Fe-S) protein assembly (CIA) machinery. Transfers electrons from NADPH via its FAD and FMN prosthetic groups to the [2Fe-2S] cluster of DRE2, another key component of the CIA machinery. In turn, this reduced cluster provides electrons for assembly of cytosolic iron-sulfur cluster proteins. Positively controls H(2)O(2)-induced cell death. The chain is NADPH-dependent diflavin oxidoreductase 1 from Eremothecium gossypii (strain ATCC 10895 / CBS 109.51 / FGSC 9923 / NRRL Y-1056) (Yeast).